An 836-amino-acid chain; its full sequence is Protein translocase subunit SecA (836 aa).

Residues Gln-85, 103–107, and Asp-492 each bind ATP; that span reads GEGKT. Zn(2+)-binding residues include Cys-820, Cys-822, Cys-831, and Cys-832.

Belongs to the SecA family. Monomer and homodimer. Part of the essential Sec protein translocation apparatus which comprises SecA, SecYEG and auxiliary proteins SecDF. Other proteins may also be involved. Zn(2+) is required as a cofactor.

It is found in the cell membrane. Its subcellular location is the cytoplasm. The catalysed reaction is ATP + H2O + cellular proteinSide 1 = ADP + phosphate + cellular proteinSide 2.. Part of the Sec protein translocase complex. Interacts with the SecYEG preprotein conducting channel. Has a central role in coupling the hydrolysis of ATP to the transfer of proteins into and across the cell membrane, serving as an ATP-driven molecular motor driving the stepwise translocation of polypeptide chains across the membrane. This chain is Protein translocase subunit SecA, found in Clostridium botulinum (strain Eklund 17B / Type B).